Consider the following 546-residue polypeptide: Membrane protein insertase YidC (546 aa).

The chain crosses the membrane as a helical span at residues 6-26 (LILFIVFSFSLLLLWEAWQDK). The disordered stretch occupies residues 31-56 (PATRPVAGAPAGSAAPTPSTALNAPA). Positions 37–56 (AGAPAGSAAPTPSTALNAPA) are enriched in low complexity. 4 helical membrane passes run 351–371 (LVGN…LALY), 425–445 (LPIL…LAAV), 465–482 (WYIL…QVKL), and 494–514 (IMMI…AGLV).

The protein belongs to the OXA1/ALB3/YidC family. Type 1 subfamily. In terms of assembly, interacts with the Sec translocase complex via SecD. Specifically interacts with transmembrane segments of nascent integral membrane proteins during membrane integration.

It localises to the cell inner membrane. In terms of biological role, required for the insertion and/or proper folding and/or complex formation of integral membrane proteins into the membrane. Involved in integration of membrane proteins that insert both dependently and independently of the Sec translocase complex, as well as at least some lipoproteins. Aids folding of multispanning membrane proteins. The polypeptide is Membrane protein insertase YidC (Thiobacillus denitrificans (strain ATCC 25259 / T1)).